The following is a 125-amino-acid chain: Large ribosomal subunit protein eL31 (125 aa).

It belongs to the eukaryotic ribosomal protein eL31 family. As to quaternary structure, component of the large ribosomal subunit.

It is found in the cytoplasm. Its function is as follows. Component of the large ribosomal subunit. The ribosome is a large ribonucleoprotein complex responsible for the synthesis of proteins in the cell. In Ictalurus punctatus (Channel catfish), this protein is Large ribosomal subunit protein eL31 (rpl31).